Here is a 700-residue protein sequence, read N- to C-terminus: Acetoacetyl-CoA synthetase (700 aa).

Positions 1 to 35 (MTAVSANGKTTEKHENGAHTNGTTNGTTNGSMNGN) are disordered. Low complexity predominate over residues 18 to 35 (AHTNGTTNGTTNGSMNGN).

This sequence belongs to the ATP-dependent AMP-binding enzyme family. As to expression, present in most cells of the organism.

It localises to the cytoplasm. The protein resides in the nucleus. It catalyses the reaction acetoacetate + ATP + CoA = acetoacetyl-CoA + AMP + diphosphate. In terms of biological role, activates acetoacetate to acetoacetyl-CoA. Negatively regulates let-60 Ras activity during vulval induction. The polypeptide is Acetoacetyl-CoA synthetase (sur-5) (Caenorhabditis elegans).